Consider the following 397-residue polypeptide: Chorismate synthase (397 aa).

Arg40 and Arg46 together coordinate NADP(+). Residues 129 to 131 (RSS), 257 to 258 (QA), Gly302, 317 to 321 (KPISS), and Arg343 contribute to the FMN site.

The protein belongs to the chorismate synthase family. Homotetramer. It depends on FMNH2 as a cofactor.

It catalyses the reaction 5-O-(1-carboxyvinyl)-3-phosphoshikimate = chorismate + phosphate. Its pathway is metabolic intermediate biosynthesis; chorismate biosynthesis; chorismate from D-erythrose 4-phosphate and phosphoenolpyruvate: step 7/7. Functionally, catalyzes the anti-1,4-elimination of the C-3 phosphate and the C-6 proR hydrogen from 5-enolpyruvylshikimate-3-phosphate (EPSP) to yield chorismate, which is the branch point compound that serves as the starting substrate for the three terminal pathways of aromatic amino acid biosynthesis. This reaction introduces a second double bond into the aromatic ring system. The chain is Chorismate synthase from Chlorobium phaeovibrioides (strain DSM 265 / 1930) (Prosthecochloris vibrioformis (strain DSM 265)).